We begin with the raw amino-acid sequence, 180 residues long: Large ribosomal subunit protein uL6c (180 aa).

Belongs to the universal ribosomal protein uL6 family. In terms of assembly, part of the 50S ribosomal subunit.

Its subcellular location is the plastid. It is found in the chloroplast. In terms of biological role, binds 23S rRNA. This chain is Large ribosomal subunit protein uL6c (rpl6), found in Porphyra purpurea (Red seaweed).